Consider the following 277-residue polypeptide: Shikimate dehydrogenase (NADP(+)) (277 aa).

Residues Ser15–Ser17 and Thr64 contribute to the shikimate site. Lys68 (proton acceptor) is an active-site residue. Positions 89 and 104 each coordinate shikimate. NADP(+) contacts are provided by residues Gly129 to Ala133, Asn153 to Arg158, and Met217. Tyr219 is a binding site for shikimate. An NADP(+)-binding site is contributed by Gly242.

It belongs to the shikimate dehydrogenase family. Homodimer.

The enzyme catalyses shikimate + NADP(+) = 3-dehydroshikimate + NADPH + H(+). It participates in metabolic intermediate biosynthesis; chorismate biosynthesis; chorismate from D-erythrose 4-phosphate and phosphoenolpyruvate: step 4/7. Its function is as follows. Involved in the biosynthesis of the chorismate, which leads to the biosynthesis of aromatic amino acids. Catalyzes the reversible NADPH linked reduction of 3-dehydroshikimate (DHSA) to yield shikimate (SA). This Hydrogenovibrio crunogenus (strain DSM 25203 / XCL-2) (Thiomicrospira crunogena) protein is Shikimate dehydrogenase (NADP(+)).